Reading from the N-terminus, the 776-residue chain is U3 small nucleolar RNA-associated protein 4 (776 aa).

WD repeat units lie at residues 35 to 40 (RCRFVD), 132 to 169 (LPLR…VLID), 178 to 214 (EHDT…RIWS), 230 to 266 (KVDK…KFWD), 271 to 308 (TLNQ…FQFS), and 417 to 452 (VCKL…KVFH).

As to quaternary structure, interacts with snoRNA U3. Interacts with MPP10. Component of the ribosomal small subunit (SSU) processome composed of at least 40 protein subunits and snoRNA U3. In the absence of snoRNA3, forms a complex with other t-UTPs. This complex can associate with pre-18S ribosomal RNAs.

It localises to the nucleus. The protein localises to the nucleolus. In terms of biological role, involved in nucleolar processing of pre-18S ribosomal RNA. Required for optimal pre-ribosomal RNA transcription by RNA polymerase I together with a subset of U3 proteins required for transcription (t-UTPs). This Saccharomyces cerevisiae (strain ATCC 204508 / S288c) (Baker's yeast) protein is U3 small nucleolar RNA-associated protein 4 (UTP4).